A 201-amino-acid polypeptide reads, in one-letter code: Elongation factor Ts (201 aa).

Residues 81–84 (TDFV) are involved in Mg(2+) ion dislocation from EF-Tu.

This sequence belongs to the EF-Ts family.

It localises to the cytoplasm. Its function is as follows. Associates with the EF-Tu.GDP complex and induces the exchange of GDP to GTP. It remains bound to the aminoacyl-tRNA.EF-Tu.GTP complex up to the GTP hydrolysis stage on the ribosome. This Syntrophus aciditrophicus (strain SB) protein is Elongation factor Ts.